A 157-amino-acid chain; its full sequence is Serine-protein kinase RsbW (157 aa).

Belongs to the anti-sigma-factor family.

It catalyses the reaction L-seryl-[protein] + ATP = O-phospho-L-seryl-[protein] + ADP + H(+). The catalysed reaction is L-threonyl-[protein] + ATP = O-phospho-L-threonyl-[protein] + ADP + H(+). In terms of biological role, negative regulator of sigma-B activity. Phosphorylates and inactivates its specific antagonist protein, RsbV. Upon phosphorylation of RsbV, RsbW is released and binds to sigma-B, thereby blocking its ability to form an RNA polymerase holoenzyme (E-sigma-B). The chain is Serine-protein kinase RsbW from Listeria monocytogenes serovar 1/2a (strain ATCC BAA-679 / EGD-e).